The sequence spans 240 residues: Sulfite dehydrogenase subunit B (240 aa).

4Fe-4S ferredoxin-type domains lie at 4–34 (LALV…WAGP), 64–95 (TETV…KRPD), and 97–126 (GVVL…LDAQ). [4Fe-4S] cluster-binding residues include cysteine 13, cysteine 16, cysteine 19, cysteine 23, cysteine 73, cysteine 76, cysteine 81, cysteine 85, cysteine 106, cysteine 109, cysteine 112, and cysteine 116.

In terms of assembly, forms a heterotrimeric membrane-bound complex composed of a catalytic heterodimer (SoeAB) and a membrane anchor protein (SoeC). Requires [4Fe-4S] cluster as cofactor.

It localises to the cell inner membrane. Part of the SoeABC complex that catalyzes the oxidation of sulfite to sulfate. SoeB is probably the electron transfer subunit. The protein is Sulfite dehydrogenase subunit B of Allochromatium vinosum (strain ATCC 17899 / DSM 180 / NBRC 103801 / NCIMB 10441 / D) (Chromatium vinosum).